The sequence spans 170 residues: Small ribosomal subunit protein mS41 (170 aa).

The N-terminal 20 residues, 1–20, are a transit peptide targeting the mitochondrion; that stretch reads MFRTLLSSTVRSIQLKPVTS.

This sequence belongs to the mitochondrion-specific ribosomal protein mS41 family. Component of the mitochondrial small ribosomal subunit (mt-SSU).

The protein resides in the mitochondrion. In terms of biological role, component of the mitochondrial ribosome (mitoribosome), a dedicated translation machinery responsible for the synthesis of mitochondrial genome-encoded proteins, including at least some of the essential transmembrane subunits of the mitochondrial respiratory chain. The mitoribosomes are attached to the mitochondrial inner membrane and translation products are cotranslationally integrated into the membrane. mS41 is involved in telomere length regulation. This is Small ribosomal subunit protein mS41 (FYV4) from Candida albicans (strain SC5314 / ATCC MYA-2876) (Yeast).